A 22-amino-acid chain; its full sequence is Melittin-like peptide (22 aa).

Position 22 is a glutamine amide (glutamine 22).

As to expression, expressed by the skin dorsal glands.

The protein localises to the secreted. The sequence is that of Melittin-like peptide from Rana temporaria (European common frog).